A 533-amino-acid polypeptide reads, in one-letter code: Calcium-dependent protein kinase 19 (533 aa).

Polar residues-rich tracts occupy residues 1 to 12 (MGSCCSRATSPD) and 24 to 38 (SHQT…SYNH). Positions 1–53 (MGSCCSRATSPDSGRGGANGYGYSHQTKPAQTTPSYNHPQPPPPAEVRYTPSA) are disordered. Glycine 2 is lipidated: N-myristoyl glycine. Positions 85–343 (YSLGKELGRG…SAQVLQHPWL (259 aa)) constitute a Protein kinase domain. Residues 91-99 (LGRGQFGVT) and lysine 114 contribute to the ATP site. Aspartate 209 functions as the Proton acceptor in the catalytic mechanism. The tract at residues 348-378 (ASDKPIDSAVLSRMKQFRAMNKLKKMALKVI) is autoinhibitory domain. EF-hand domains are found at residues 385-420 (EEIK…LGSK), 421-456 (LSEA…RHKL), 457-492 (ERDE…HEMG), and 497-527 (IKDI…GGMQ). 19 residues coordinate Ca(2+): aspartate 398, aspartate 400, serine 402, threonine 404, glutamate 409, aspartate 434, aspartate 436, asparagine 438, serine 440, glutamate 445, aspartate 470, aspartate 472, serine 474, glutamate 481, aspartate 505, aspartate 507, aspartate 509, arginine 511, and glutamate 516.

It belongs to the protein kinase superfamily. Ser/Thr protein kinase family. CDPK subfamily. As to expression, expressed in root tips, leaf veins, mesophyll cells, flower reproductive organs and mature pollen grains.

It localises to the membrane. The catalysed reaction is L-seryl-[protein] + ATP = O-phospho-L-seryl-[protein] + ADP + H(+). It carries out the reaction L-threonyl-[protein] + ATP = O-phospho-L-threonyl-[protein] + ADP + H(+). Activated by calcium. Autophosphorylation may play an important role in the regulation of the kinase activity. In terms of biological role, may play a role in signal transduction pathways that involve calcium as a second messenger. This Oryza sativa subsp. japonica (Rice) protein is Calcium-dependent protein kinase 19.